A 603-amino-acid chain; its full sequence is Aquaporin-2 (603 aa).

A helical transmembrane segment spans residues 40 to 70 (SLKKYKYNLFFEFIGSFLFVFFISIYMLNSN). Basic and acidic residues-rich tracts occupy residues 135–149 (NNKS…DDKI) and 156–190 (EFEK…EDPK). The disordered stretch occupies residues 135-200 (NNKSKREVER…NISNKNENYD (66 aa)). Over residues 191-200 (NISNKNENYD) the composition is skewed to polar residues. 5 helical membrane passes run 282-299 (HAIY…FILL), 321-346 (FALS…AHLY), 360-393 (IIKT…EENK), 442-471 (NKYI…VTNT), and 509-542 (ITKI…FLSL).

This sequence belongs to the MIP/aquaporin (TC 1.A.8) family.

It localises to the endomembrane system. The catalysed reaction is H2O(in) = H2O(out). It carries out the reaction glycerol(in) = glycerol(out). Functionally, required for sporozoite development in the mosquito vector. The protein is Aquaporin-2 of Plasmodium falciparum (isolate NF54).